The chain runs to 140 residues: Nucleoside diphosphate kinase (140 aa).

6 residues coordinate ATP: lysine 11, phenylalanine 59, arginine 87, threonine 93, arginine 104, and asparagine 114. Histidine 117 serves as the catalytic Pros-phosphohistidine intermediate.

This sequence belongs to the NDK family. Homotetramer. Mg(2+) serves as cofactor.

Its subcellular location is the cytoplasm. The enzyme catalyses a 2'-deoxyribonucleoside 5'-diphosphate + ATP = a 2'-deoxyribonucleoside 5'-triphosphate + ADP. It catalyses the reaction a ribonucleoside 5'-diphosphate + ATP = a ribonucleoside 5'-triphosphate + ADP. Functionally, major role in the synthesis of nucleoside triphosphates other than ATP. The ATP gamma phosphate is transferred to the NDP beta phosphate via a ping-pong mechanism, using a phosphorylated active-site intermediate. This is Nucleoside diphosphate kinase from Methylocella silvestris (strain DSM 15510 / CIP 108128 / LMG 27833 / NCIMB 13906 / BL2).